The sequence spans 266 residues: RNA-binding protein 7 (266 aa).

Gly2 carries the post-translational modification N-acetylglycine. An RRM domain is found at 10 to 87 (RTLFVGNLET…RPIKIQFRSG (78 aa)). ZCCHC8 binding stretches follow at residues 25-35 (LLFELFHQAGP) and 59-76 (HEVS…IKLY). The span at 90–115 (HAPQDVSLSYPQHHVGNSSPTSTSPS) shows a compositional bias: polar residues. Residues 90–118 (HAPQDVSLSYPQHHVGNSSPTSTSPSRYE) are disordered. 2 positions are modified to phosphoserine: Ser136 and Ser137. Residue Arg152 is modified to Omega-N-methylarginine. Residues 162 to 266 (SSPLDQSGFS…RDGKWRSSRH (105 aa)) are disordered. The segment covering 173 to 188 (SVQSHSHSFNQSSSSQ) has biased composition (low complexity). Ser204 is modified (phosphoserine). The span at 209-266 (ADRHYSREQRYTDHGSDHHYRGKRDDFFYEDRNHDDWSHDYDNRRDSSRDGKWRSSRH) shows a compositional bias: basic and acidic residues.

As to quaternary structure, component of the nuclear exosome targeting (NEXT) complex composed of MTREX, ZCCHC8, and RBM7 that directs a subset of non-coding short-lived RNAs for exosomal degradation. Interacts with ZCCHC8 and SF3B2/SAP145. Binds to MTREX through ZCCHC8. Interacts with YWHAE and YWHAZ; these interactions are stress-dependent and RBM7 phosphorylation dependent; release RNA from the NEXT complex and may affect RNA targeting to the nuclear RNA exosomome for degradation. Interacts with MEPCE and LARP7, the core subunits of 7SK snRNP; upon genotoxic stress this interaction is enhanced, triggering the release of inactive P-TEFb complex from the core and P-TEFb complex activation. In terms of processing, phosphorylated at Ser-136 by MAPK14/p38-alpha-activated MAPKAPK2/MK2; this phosphorylation is stress-dependent; this phosphorylation decreases its RNA-binding capacity therefore affecting RNA nuclear exosome-mediated degradation. This phosphorylation mediates YWHAE and YWHAZ interactions. In terms of tissue distribution, ubiquitous.

The protein resides in the nucleus. The protein localises to the nucleoplasm. Its function is as follows. RNA-binding subunit of the trimeric nuclear exosome targeting (NEXT) complex, a complex that functions as an RNA exosome cofactor that directs a subset of non-coding short-lived RNAs for exosomal degradation. NEXT is involved in surveillance and turnover of aberrant transcripts and non-coding RNAs. Binds preferentially polyuridine sequences and associates with newly synthesized RNAs, including pre-mRNAs and short-lived exosome substrates such as promoter upstream transcripts (PROMPTs), enhancer RNAs (eRNAs), and 3'-extended products from small nuclear RNAs (snRNAs). Participates in several biological processes including DNA damage response (DDR) and stress response. During stress response, activation of the p38MAPK-MK2 pathway decreases RBM7-RNA-binding and subsequently the RNA exosome degradation activities, thereby modulating the turnover of non-coding transcriptome. Participates in DNA damage response (DDR), through its interaction with MEPCE and LARP7, the core subunits of 7SK snRNP complex, that release the positive transcription elongation factor b (P-TEFb) complex from the 7SK snRNP. In turn, activation of P-TEFb complex induces the transcription of P-TEFb-dependent DDR genes to promote cell viability. This Homo sapiens (Human) protein is RNA-binding protein 7.